Consider the following 855-residue polypeptide: Pentatricopeptide repeat-containing protein At1g74750 (855 aa).

Positions 21-40 (GSRPSAADGNSCTCAEDESG) are disordered. PPR repeat units follow at residues 358-392 (DGHT…GCKP), 393-427 (NTVT…GCEP), 428-462 (DRVT…GLSP), 463-497 (DTFT…GCTP), 498-532 (NLVT…GFQP), 533-567 (DKVT…NWVP), 568-602 (DEPV…GLRP), and 603-637 (NVPT…GLHP). Residues 755–838 (INLHVMSEGT…NSGCFVGSGE (84 aa)) enclose the Smr domain.

This sequence belongs to the PPR family. P subfamily.

In Arabidopsis thaliana (Mouse-ear cress), this protein is Pentatricopeptide repeat-containing protein At1g74750.